Here is a 127-residue protein sequence, read N- to C-terminus: Mediator of RNA polymerase II transcription subunit 31 (127 aa).

This sequence belongs to the Mediator complex subunit 31 family. As to quaternary structure, component of the Mediator complex.

It is found in the nucleus. In terms of biological role, component of the Mediator complex, a coactivator involved in the regulated transcription of nearly all RNA polymerase II-dependent genes. Mediator functions as a bridge to convey information from gene-specific regulatory proteins to the basal RNA polymerase II transcription machinery. Mediator is recruited to promoters by direct interactions with regulatory proteins and serves as a scaffold for the assembly of a functional preinitiation complex with RNA polymerase II and the general transcription factors. The protein is Mediator of RNA polymerase II transcription subunit 31 (SOH1) of Eremothecium gossypii (strain ATCC 10895 / CBS 109.51 / FGSC 9923 / NRRL Y-1056) (Yeast).